Reading from the N-terminus, the 1425-residue chain is Death-associated protein kinase dapk-1 (1425 aa).

The region spanning 28–289 (YEIETELGSG…VEECLQHPWI (262 aa)) is the Protein kinase domain. Residues 34–42 (LGSGQFAVV) and lysine 57 contribute to the ATP site. Residue aspartate 155 is the Proton acceptor of the active site. ANK repeat units follow at residues 392-421 (NGATAMHCAAKYGHAEVFNYFHMKGGNICA), 425-454 (NGDTPLHVACRFAQHTVAGYVANEKIDVDS), 458-487 (TGETALHCAVESADTRVVRLLLQLRPRLDL), 491-520 (SGDTVLHLAADSINPRIVPLLVCLAPPLHL), 524-553 (REETPLHVAAARGHVDCVQALLDANSPIDA), 557-586 (DGKTALIIALENGNVDIASILITNGCDINH), 590-619 (HGDTALHIASKHGLLQAVQTLCHCAVTVDS), 623-652 (NKKTALHLAAHYGHVDIIRVLLLARADVTL), 810-841 (GGYEPMHTCYDHFVGNADCIHLILYRTSDPTE), and 934-963 (IGMKTLKMELAKCRTNILAKLLKPLAILDT). One can recognise a Roc domain in the interval 695–950 (LDTSLRRIKL…MELAKCRTNI (256 aa)). The 82-residue stretch at 1308-1389 (ELACLLDPPH…DARDALYRTV (82 aa)) folds into the Death domain.

Belongs to the protein kinase superfamily. CAMK Ser/Thr protein kinase family. DAP kinase subfamily. In terms of assembly, interacts with ptrn-1. Mg(2+) serves as cofactor. Expressed in epidermis, muscles and neurons.

The protein resides in the cytoplasm. The protein localises to the cytosol. It is found in the cytoskeleton. It carries out the reaction L-seryl-[protein] + ATP = O-phospho-L-seryl-[protein] + ADP + H(+). The enzyme catalyses L-threonyl-[protein] + ATP = O-phospho-L-threonyl-[protein] + ADP + H(+). Its function is as follows. Negative regulator of epidermal barrier repair and innate immune responses to wounding. The role in epidermal tissue integrity and wound healing is established through the inhibition of epidermal microtubule stability, possibly via the negative regulation of the microtubule minus-end binding protein ptrn-1. In epidermis, prevents expression of specific unc-44 isoforms probably by promoting nuclear localization of pinn-1, which in turn may affect sydn-1-ssup-72-mediated regulation of alternative polyadenylation of unc-44 mRNA. Appears to act downstream of or in parallel to muscarinic signaling in the regulation of autophagy. This Caenorhabditis elegans protein is Death-associated protein kinase dapk-1.